Consider the following 526-residue polypeptide: MLO-like protein 1 (526 aa).

The Extracellular portion of the chain corresponds to 1-11; sequence MGHGGEGMSLE. Residues 12–32 form a helical membrane-spanning segment; it reads FTPTWVVAGVCTVIVAISLAV. Topologically, residues 33–61 are cytoplasmic; the sequence is ERLLHYFGTVLKKKKQKPLYEALQKVKEE. The helical transmembrane segment at 62–82 threads the bilayer; that stretch reads LMLLGFISLLLTVFQGLISKF. The Extracellular portion of the chain corresponds to 83 to 160; the sequence is CVKENVLMHM…LSLEALHHLH (78 aa). The helical transmembrane segment at 161 to 181 threads the bilayer; it reads IFIFVLAISHVTFCVLTVIFG. Over 182-287 the chain is Cytoplasmic; sequence STRIHQWKKW…MRALEDDFKQ (106 aa). 2 helical membrane-spanning segments follow: residues 288 to 308 and 309 to 329; these read VVGI…LNVN and GWHT…AVGT. Topologically, residues 330–372 are cytoplasmic; sequence KLEHVIAQLAHEVAEKHVAIEGDLVVKPSDEHFWFSKPQIVLY. The helical transmembrane segment at 373–393 threads the bilayer; that stretch reads LIHFILFQNAFEIAFFFWIWV. Over 394–412 the chain is Extracellular; sequence TYGFDSCIMGQVRYIVPRL. The helical transmembrane segment at 413-433 threads the bilayer; sequence VIGVFIQVLCSYSTLPLYAIV. Residues 434 to 526 lie on the Cytoplasmic side of the membrane; that stretch reads SQMGSSFKKA…NNEITPDHNN (93 aa). The segment at 447–468 is calmodulin-binding; that stretch reads ENVQVGLVGWAQKVKQKRDLKA. A disordered region spans residues 471 to 526; sequence SNGDEGSSQAGPGPDSGSGSAPAAGPGAGFAGIQLSRVTRNNAGDTNNEITPDHNN. Positions 476–495 are enriched in low complexity; that stretch reads GSSQAGPGPDSGSGSAPAAG. A compositionally biased stretch (polar residues) spans 506–520; that stretch reads SRVTRNNAGDTNNEI.

This sequence belongs to the MLO family.

The protein resides in the cell membrane. Functionally, may be involved in modulation of pathogen defense and leaf cell death. Activity seems to be regulated by Ca(2+)-dependent calmodulin binding and seems not to require heterotrimeric G proteins. In Arabidopsis thaliana (Mouse-ear cress), this protein is MLO-like protein 1 (MLO1).